A 789-amino-acid chain; its full sequence is Glycerol-3-phosphate acyltransferase (789 aa).

The HXXXXD motif motif lies at 276 to 281 (HRSYID).

Belongs to the GPAT/DAPAT family.

Its subcellular location is the cell membrane. It catalyses the reaction sn-glycerol 3-phosphate + an acyl-CoA = a 1-acyl-sn-glycero-3-phosphate + CoA. Its pathway is phospholipid metabolism; CDP-diacylglycerol biosynthesis; CDP-diacylglycerol from sn-glycerol 3-phosphate: step 1/3. This chain is Glycerol-3-phosphate acyltransferase (plsB), found in Mycobacterium tuberculosis (strain CDC 1551 / Oshkosh).